The sequence spans 402 residues: Enoyl-[acyl-carrier-protein] reductase [NADH] (402 aa).

NAD(+) is bound by residues 48-53, 74-75, 111-112, and 140-141; these read GASSGY, FE, DA, and LA. Tyr-226 serves as a coordination point for substrate. Tyr-236 (proton donor) is an active-site residue. NAD(+)-binding positions include Lys-245 and 274–276; that span reads VVT.

The protein belongs to the TER reductase family. In terms of assembly, monomer.

It catalyses the reaction a 2,3-saturated acyl-[ACP] + NAD(+) = a (2E)-enoyl-[ACP] + NADH + H(+). It participates in lipid metabolism; fatty acid biosynthesis. In terms of biological role, involved in the final reduction of the elongation cycle of fatty acid synthesis (FAS II). Catalyzes the reduction of a carbon-carbon double bond in an enoyl moiety that is covalently linked to an acyl carrier protein (ACP). This chain is Enoyl-[acyl-carrier-protein] reductase [NADH], found in Xanthomonas axonopodis pv. citri (strain 306).